We begin with the raw amino-acid sequence, 144 residues long: MKTVFVLNGPNLNALGKREPGIYGGKTLAAIADDCKQAGASLGLGIDFRQSNHEGDLVDWIQEAGDKAAGIVINPGAYSHTSIAIHDAIRSIAPLPVAEVHLSNIHARESFRHVSMVAPVAVGMICGFGPLGYTLALQALAARL.

Y23 acts as the Proton acceptor in catalysis. Residues N74, H80, and D87 each contribute to the substrate site. H101 acts as the Proton donor in catalysis. Substrate-binding positions include 102 to 103 and R112; that span reads LS.

The protein belongs to the type-II 3-dehydroquinase family. In terms of assembly, homododecamer.

The enzyme catalyses 3-dehydroquinate = 3-dehydroshikimate + H2O. It functions in the pathway metabolic intermediate biosynthesis; chorismate biosynthesis; chorismate from D-erythrose 4-phosphate and phosphoenolpyruvate: step 3/7. Functionally, catalyzes a trans-dehydration via an enolate intermediate. This chain is 3-dehydroquinate dehydratase, found in Mesorhizobium japonicum (strain LMG 29417 / CECT 9101 / MAFF 303099) (Mesorhizobium loti (strain MAFF 303099)).